The sequence spans 490 residues: Cysteine protease 1 (490 aa).

The first 31 residues, 1–31 (MAGGGGKSVAAALAMACFLLILAAFAPPAAA), serve as a signal peptide directing secretion. Residues 32 to 154 (APPDIMSIIR…EAYRHDGVEA (123 aa)) constitute a propeptide, activation peptide. Intrachain disulfides connect cysteine 177–cysteine 220, cysteine 211–cysteine 253, cysteine 311–cysteine 364, cysteine 395–cysteine 407, and cysteine 401–cysteine 422. Cysteine 180 is an active-site residue. Residues histidine 317 and asparagine 339 contribute to the active site. An N-linked (GlcNAc...) asparagine glycan is attached at asparagine 356. A propeptide spans 379-490 (NPKPSPPSPA…FVVLNREDLV (112 aa)) (removed in mature form).

This sequence belongs to the peptidase C1 family. As to expression, highly expressed in the tapetum and developing pollen of the anther locules. Weakly expressed in root and germinating seed, hardly in the anther-less-flower and not detected in leaf.

Its function is as follows. Cysteine protease that may play a role in pollen development. May be regulated by the transcription factor UDT1 in developing anthers and play a role in tapetum development. Positively regulated by the transcription factor TDR in developing anthers and may play a role in tapetum programmed cell death (PCD). The sequence is that of Cysteine protease 1 (CP1) from Oryza sativa subsp. japonica (Rice).